Reading from the N-terminus, the 193-residue chain is Signal peptidase I (193 aa).

The Cytoplasmic segment spans residues methionine 1–lysine 25. The helical transmembrane segment at alanine 26–phenylalanine 42 threads the bilayer. Residues glutamate 43–lysine 193 lie on the Extracellular side of the membrane. Active-site residues include serine 51 and lysine 93.

This sequence belongs to the peptidase S26 family.

The protein resides in the cell membrane. The enzyme catalyses Cleavage of hydrophobic, N-terminal signal or leader sequences from secreted and periplasmic proteins.. In Bacillus amyloliquefaciens (Bacillus velezensis), this protein is Signal peptidase I (sipS2).